The sequence spans 294 residues: 4-hydroxy-tetrahydrodipicolinate synthase (294 aa).

Pyruvate is bound at residue T45. The Proton donor/acceptor role is filled by Y133. The active-site Schiff-base intermediate with substrate is K162. A pyruvate-binding site is contributed by V204.

This sequence belongs to the DapA family. In terms of assembly, homotetramer; dimer of dimers.

Its subcellular location is the cytoplasm. The enzyme catalyses L-aspartate 4-semialdehyde + pyruvate = (2S,4S)-4-hydroxy-2,3,4,5-tetrahydrodipicolinate + H2O + H(+). It participates in amino-acid biosynthesis; L-lysine biosynthesis via DAP pathway; (S)-tetrahydrodipicolinate from L-aspartate: step 3/4. Functionally, catalyzes the condensation of (S)-aspartate-beta-semialdehyde [(S)-ASA] and pyruvate to 4-hydroxy-tetrahydrodipicolinate (HTPA). The sequence is that of 4-hydroxy-tetrahydrodipicolinate synthase from Bartonella bacilliformis (strain ATCC 35685 / KC583 / Herrer 020/F12,63).